We begin with the raw amino-acid sequence, 668 residues long: Metastasis-associated protein MTA2 (668 aa).

Residues 1 to 144 (MAANMYRVGD…PVQKTLLADQ (144 aa)) form the BAH domain. Residues Ser-52 and Ser-54 each carry the phosphoserine modification. One can recognise an ELM2 domain in the interval 145 to 256 (GEIRVGCKYQ…KAMSTLVPQG (112 aa)). An N6-acetyllysine modification is found at Lys-152. In terms of domain architecture, SANT spans 263 to 315 (DEMEEWSASEAMLFEEALEKYGKDFNDIRQDFLPWKSLASIVQFYYMWKTTDR). The GATA-type; atypical zinc-finger motif lies at 367–394 (CESCHTTQSAQWYAWGPPNMQCRLCASC). Polar residues predominate over residues 409–419 (QLEGATRGTTE). Residues 409–437 (QLEGATRGTTEPHSRGHLSRPEAQSLSPY) form a disordered region. Phosphoserine is present on residues Ser-433 and Ser-435. Lys-460 carries the N6-acetyllysine modification. A Glycyl lysine isopeptide (Lys-Gly) (interchain with G-Cter in SUMO2 and SUMO3); alternate cross-link involves residue Lys-492. Lys-492 is covalently cross-linked (Glycyl lysine isopeptide (Lys-Gly) (interchain with G-Cter in SUMO2); alternate). A Glycyl lysine isopeptide (Lys-Gly) (interchain with G-Cter in SUMO2) cross-link involves residue Lys-508. An N6-acetyllysine mark is found at Lys-522 and Lys-531. Residue Thr-534 is modified to Phosphothreonine. A Phosphoserine modification is found at Ser-548. Glycyl lysine isopeptide (Lys-Gly) (interchain with G-Cter in SUMO2) cross-links involve residues Lys-559 and Lys-595. 2 disordered regions span residues 580 to 599 (ASGI…LNPA) and 647 to 668 (PPVP…VLED).

This sequence belongs to the metastasis-associated protein family. In terms of assembly, component of the nucleosome remodeling and deacetylase (NuRD) repressor complex, composed of core proteins MTA1, MTA2, MTA3, RBBP4, RBBP7, HDAC1, HDAC2, MBD2, MBD3, and peripherally associated proteins CDK2AP1, CDK2AP2, GATAD2A, GATAD2B, CHD3, CHD4 and CHD5. The exact stoichiometry of the NuRD complex is unknown, and some subunits such as MBD2 and MBD3, GATAD2A and GATAD2B, and CHD3, CHD4 and CHD5 define mutually exclusive NuRD complexes. Interacts with CHD3. Interacts with CHD4. Interacts with GATAD2A. Interacts with HDAC7. Interacts with MBD3. Interacts with p53/TP53. Interacts with MINT. Interacts with PIMREG. Interacts with NACC2. Interacts with ERCC6. Interacts with PWWP2B. Interacts with transcription factor BCL11A. Widely expressed.

It localises to the nucleus. In terms of biological role, may function as a transcriptional coregulator. Acts as a component of the histone deacetylase NuRD complex which participates in the remodeling of chromatin. The polypeptide is Metastasis-associated protein MTA2 (MTA2) (Homo sapiens (Human)).